The primary structure comprises 405 residues: 3-isopropylmalate dehydrogenase (405 aa).

86 to 104 serves as a coordination point for NAD(+); that stretch reads GAANTVWTTPDGRTDVRPE. Residues R111, R121, R148, and D237 each coordinate substrate. Mg(2+)-binding residues include D237, D262, and D266. 301–312 contributes to the NAD(+) binding site; it reads GSAPDLGKQKVN. The disordered stretch occupies residues 352 to 371; that stretch reads ADIGGSSSTSEVGDLLPTRS.

It belongs to the isocitrate and isopropylmalate dehydrogenases family. As to quaternary structure, homodimer. It depends on Mg(2+) as a cofactor. The cofactor is Mn(2+).

The protein resides in the cytoplasm. It carries out the reaction (2R,3S)-3-isopropylmalate + NAD(+) = 4-methyl-2-oxopentanoate + CO2 + NADH. Its pathway is amino-acid biosynthesis; L-leucine biosynthesis; L-leucine from 3-methyl-2-oxobutanoate: step 3/4. Functionally, catalyzes the oxidation of 3-carboxy-2-hydroxy-4-methylpentanoate (3-isopropylmalate) to 3-carboxy-4-methyl-2-oxopentanoate. The product decarboxylates to 4-methyl-2 oxopentanoate. The sequence is that of 3-isopropylmalate dehydrogenase (LEU2) from Yarrowia lipolytica (strain CLIB 122 / E 150) (Yeast).